The following is a 403-amino-acid chain: Acetate kinase (403 aa).

Asparagine 8 is a binding site for Mg(2+). Lysine 15 serves as a coordination point for ATP. Residue arginine 90 coordinates substrate. The active-site Proton donor/acceptor is aspartate 147. ATP contacts are provided by residues 207–211 (HLGSG), 282–284 (DLR), and 330–334 (GVGEN). Glutamate 384 is a Mg(2+) binding site.

It belongs to the acetokinase family. In terms of assembly, homodimer. Mg(2+) serves as cofactor. The cofactor is Mn(2+).

The protein resides in the cytoplasm. The enzyme catalyses acetate + ATP = acetyl phosphate + ADP. Its pathway is metabolic intermediate biosynthesis; acetyl-CoA biosynthesis; acetyl-CoA from acetate: step 1/2. Its function is as follows. Catalyzes the formation of acetyl phosphate from acetate and ATP. Can also catalyze the reverse reaction. The chain is Acetate kinase from Exiguobacterium sibiricum (strain DSM 17290 / CCUG 55495 / CIP 109462 / JCM 13490 / 255-15).